Consider the following 427-residue polypeptide: Enolase (427 aa).

Gln163 is a (2R)-2-phosphoglycerate binding site. Glu205 (proton donor) is an active-site residue. 3 residues coordinate Mg(2+): Asp242, Glu285, and Asp312. Residues Lys337, Arg366, Ser367, and Lys388 each contribute to the (2R)-2-phosphoglycerate site. The active-site Proton acceptor is the Lys337.

Belongs to the enolase family. The cofactor is Mg(2+).

It is found in the cytoplasm. The protein resides in the secreted. It localises to the cell surface. The catalysed reaction is (2R)-2-phosphoglycerate = phosphoenolpyruvate + H2O. Its pathway is carbohydrate degradation; glycolysis; pyruvate from D-glyceraldehyde 3-phosphate: step 4/5. Functionally, catalyzes the reversible conversion of 2-phosphoglycerate (2-PG) into phosphoenolpyruvate (PEP). It is essential for the degradation of carbohydrates via glycolysis. This Bradyrhizobium diazoefficiens (strain JCM 10833 / BCRC 13528 / IAM 13628 / NBRC 14792 / USDA 110) protein is Enolase.